We begin with the raw amino-acid sequence, 346 residues long: Dimethyladenosine transferase 1, mitochondrial (346 aa).

Residues 1-27 constitute a mitochondrion transit peptide; it reads MATQGVLAKYRLPPLPTIGEIIKLFNL. The S-adenosyl-L-methionine site is built by N36, L38, G63, E85, K86, D111, I112, and N141.

The protein belongs to the class I-like SAM-binding methyltransferase superfamily. rRNA adenine N(6)-methyltransferase family. KsgA subfamily.

The protein resides in the mitochondrion. It carries out the reaction adenosine(N)/adenosine(N+1) in rRNA + 4 S-adenosyl-L-methionine = N(6)-dimethyladenosine(N)/N(6)-dimethyladenosine(N+1) in rRNA + 4 S-adenosyl-L-homocysteine + 4 H(+). Its function is as follows. Mitochondrial methyltransferase which uses S-adenosyl methionine to dimethylate two highly conserved adjacent adenosine residues (A1583 and A1584) within the loop of helix 45 at the 3-prime end of 12S rRNA, thereby regulating the assembly or stability of the small subunit of the mitochondrial ribosome. Also required for basal transcription of mitochondrial DNA, probably via its interaction with POLRMT and TFAM. Stimulates transcription independently of the methyltransferase activity. The sequence is that of Dimethyladenosine transferase 1, mitochondrial (tfb1m) from Xenopus tropicalis (Western clawed frog).